Consider the following 387-residue polypeptide: 3-ketoacyl-CoA thiolase (387 aa).

Residue C91 is the Acyl-thioester intermediate of the active site. Active-site proton acceptor residues include H343 and C373.

This sequence belongs to the thiolase-like superfamily. Thiolase family. In terms of assembly, heterotetramer of two alpha chains (FadB) and two beta chains (FadA).

It localises to the cytoplasm. It carries out the reaction an acyl-CoA + acetyl-CoA = a 3-oxoacyl-CoA + CoA. It participates in lipid metabolism; fatty acid beta-oxidation. Its function is as follows. Catalyzes the final step of fatty acid oxidation in which acetyl-CoA is released and the CoA ester of a fatty acid two carbons shorter is formed. This is 3-ketoacyl-CoA thiolase from Escherichia coli O1:K1 / APEC.